The chain runs to 164 residues: V-type proton ATPase subunit c' (164 aa).

Residues 1–16 (MDMVASDNVYAPLYAP) lie on the Lumenal side of the membrane. A helical membrane pass occupies residues 17 to 37 (FFGFAGCALAMILSCLGAAIG). Residues 38–59 (TAKSGIGIAGIGTFKPELIMKS) are Cytoplasmic-facing. The helical transmembrane segment at 60–80 (LIPVVMSGILAIYGLVVAVLI) threads the bilayer. Residues 81-98 (AGNLSPTEEYTLFNGFMH) lie on the Lumenal side of the membrane. A helical transmembrane segment spans residues 99-119 (LSCGLCVGFACLSSGYAIGIV). Over 120–136 (GDVGVRKYMHQPRLFVG) the chain is Cytoplasmic. A helical membrane pass occupies residues 137-157 (IVLILIFSEVLGLYGMIIALI). Residues 158 to 164 (LNTKGSE) are Lumenal-facing.

This sequence belongs to the V-ATPase proteolipid subunit family. In terms of assembly, V-ATPase is a heteromultimeric enzyme composed of a peripheral catalytic V1 complex (components A to H) attached to an integral membrane V0 proton pore complex (components: a, c, c', c'', d, e, f and VOA1). The decameric c-ring forms the proton-conducting pore, and is composed of eight proteolipid subunits c, one subunit c' and one subunit c''.

Its subcellular location is the vacuole membrane. Its function is as follows. Proton-conducting pore forming subunit of the V0 complex of vacuolar(H+)-ATPase (V-ATPase), a multisubunit enzyme composed of a peripheral complex (V1) that hydrolyzes ATP and a membrane integral complex (V0) that translocates protons. V-ATPase is responsible for acidifying and maintaining the pH of intracellular compartments. This chain is V-type proton ATPase subunit c' (VMA11), found in Candida glabrata (strain ATCC 2001 / BCRC 20586 / JCM 3761 / NBRC 0622 / NRRL Y-65 / CBS 138) (Yeast).